We begin with the raw amino-acid sequence, 246 residues long: tRNA (guanine-N(1)-)-methyltransferase (246 aa).

S-adenosyl-L-methionine-binding positions include Gly117 and 137–142 (IGDYVL).

This sequence belongs to the RNA methyltransferase TrmD family. In terms of assembly, homodimer.

The protein localises to the cytoplasm. It catalyses the reaction guanosine(37) in tRNA + S-adenosyl-L-methionine = N(1)-methylguanosine(37) in tRNA + S-adenosyl-L-homocysteine + H(+). Functionally, specifically methylates guanosine-37 in various tRNAs. In Acinetobacter baumannii (strain ACICU), this protein is tRNA (guanine-N(1)-)-methyltransferase.